We begin with the raw amino-acid sequence, 138 residues long: Cysteine desulfuration protein SufE (138 aa).

The active-site Cysteine persulfide intermediate is Cys51.

Belongs to the SufE family. As to quaternary structure, homodimer. Interacts with SufS.

It is found in the cytoplasm. It participates in cofactor biosynthesis; iron-sulfur cluster biosynthesis. Participates in cysteine desulfuration mediated by SufS. Cysteine desulfuration mobilizes sulfur from L-cysteine to yield L-alanine and constitutes an essential step in sulfur metabolism for biosynthesis of a variety of sulfur-containing biomolecules. Functions as a sulfur acceptor for SufS, by mediating the direct transfer of the sulfur atom from the S-sulfanylcysteine of SufS, an intermediate product of cysteine desulfuration process. In Photorhabdus laumondii subsp. laumondii (strain DSM 15139 / CIP 105565 / TT01) (Photorhabdus luminescens subsp. laumondii), this protein is Cysteine desulfuration protein SufE.